Reading from the N-terminus, the 408-residue chain is Acetylornithine aminotransferase (408 aa).

Pyridoxal 5'-phosphate contacts are provided by residues 107–108 (GT) and Phe-141. N(2)-acetyl-L-ornithine is bound at residue Arg-144. 227–230 (DEIQ) contributes to the pyridoxal 5'-phosphate binding site. The residue at position 256 (Lys-256) is an N6-(pyridoxal phosphate)lysine. N(2)-acetyl-L-ornithine is bound at residue Thr-284. Thr-285 provides a ligand contact to pyridoxal 5'-phosphate.

The protein belongs to the class-III pyridoxal-phosphate-dependent aminotransferase family. ArgD subfamily. Homodimer. It depends on pyridoxal 5'-phosphate as a cofactor.

The protein localises to the cytoplasm. It carries out the reaction N(2)-acetyl-L-ornithine + 2-oxoglutarate = N-acetyl-L-glutamate 5-semialdehyde + L-glutamate. Its pathway is amino-acid biosynthesis; L-arginine biosynthesis; N(2)-acetyl-L-ornithine from L-glutamate: step 4/4. The protein is Acetylornithine aminotransferase of Xanthomonas axonopodis pv. citri (strain 306).